A 2182-amino-acid chain; its full sequence is Autophagy-related protein 2 (2182 aa).

6 disordered regions span residues 291–375, 392–426, 523–630, 663–682, 736–758, and 793–816; these read SPSL…PLAD, EQDYPLGDSEDALGIPYEFSNPQDDDAEDSPATPR, YTHE…STTL, DIDPENPRASTKQQEDVATP, GAFSVHGATHAQQRSSQGTSSVE, and DKKPSPAEGSKQDTASKDAPSKET. 2 stretches are compositionally biased toward polar residues: residues 303–313 and 322–331; these read NPPSRQATELS and VSSSQASIRS. Residues 332–347 are compositionally biased toward basic and acidic residues; that stretch reads NEPESASHHSLPENDH. Composition is skewed to acidic residues over residues 528–540 and 613–624; these read AENEPAPEVEQTT and WDDDYDDPEEEP. Polar residues predominate over residues 745 to 758; sequence HAQQRSSQGTSSVE. The span at 793–813 shows a compositional bias: basic and acidic residues; that stretch reads DKKPSPAEGSKQDTASKDAPS.

This sequence belongs to the ATG2 family. As to quaternary structure, interacts with ATG18.

The protein localises to the preautophagosomal structure membrane. It localises to the endoplasmic reticulum membrane. The catalysed reaction is a 1,2-diacyl-sn-glycero-3-phosphocholine(in) = a 1,2-diacyl-sn-glycero-3-phosphocholine(out). It carries out the reaction a 1,2-diacyl-sn-glycero-3-phospho-L-serine(in) = a 1,2-diacyl-sn-glycero-3-phospho-L-serine(out). It catalyses the reaction a 1,2-diacyl-sn-glycero-3-phosphoethanolamine(in) = a 1,2-diacyl-sn-glycero-3-phosphoethanolamine(out). Functionally, lipid transfer protein required for autophagosome completion and peroxisome degradation and peroxisome degradation. Tethers the edge of the isolation membrane (IM) to the endoplasmic reticulum (ER) and mediates direct lipid transfer from ER to IM for IM expansion. ATG2 binds to the ER exit site (ERES), which is the membrane source for autophagosome formation, using basic residues in its N-terminal region (NR) and to the expanding edge of the IM through its C-terminal region. The latter binding is assisted by an ATG18-PtdIns3P interaction. ATG2 then extracts phospholipids from the membrane source using its NR and transfers them to ATG9 to the IM through its predicted beta-sheet-rich structure for membrane expansion. Autophagy is required for proper vegetative growth, asexual/sexual reproduction, and full virulence. Autophagy is particularly involved in the biosynthesis of deoxynivalenol (DON), an important virulence determinant. The protein is Autophagy-related protein 2 of Gibberella zeae (strain ATCC MYA-4620 / CBS 123657 / FGSC 9075 / NRRL 31084 / PH-1) (Wheat head blight fungus).